Reading from the N-terminus, the 200-residue chain is Holliday junction resolvase RecU (200 aa).

Positions 1 to 25 (MTIRYPNGKRYNQASQPQKTPIKTH) are disordered. Positions 10–25 (RYNQASQPQKTPIKTH) are enriched in polar residues. 4 residues coordinate Mg(2+): Thr85, Asp87, Glu100, and Gln119.

Belongs to the RecU family. Requires Mg(2+) as cofactor.

The protein resides in the cytoplasm. The catalysed reaction is Endonucleolytic cleavage at a junction such as a reciprocal single-stranded crossover between two homologous DNA duplexes (Holliday junction).. Endonuclease that resolves Holliday junction intermediates in genetic recombination. Cleaves mobile four-strand junctions by introducing symmetrical nicks in paired strands. Promotes annealing of linear ssDNA with homologous dsDNA. Required for DNA repair, homologous recombination and chromosome segregation. This is Holliday junction resolvase RecU from Bacillus cereus (strain B4264).